Here is a 295-residue protein sequence, read N- to C-terminus: Pyridoxal 5'-phosphate synthase subunit PdxS (295 aa).

A D-ribose 5-phosphate-binding site is contributed by Asp25. Lys82 functions as the Schiff-base intermediate with D-ribose 5-phosphate in the catalytic mechanism. Gly154 contacts D-ribose 5-phosphate. Residue Arg166 coordinates D-glyceraldehyde 3-phosphate. D-ribose 5-phosphate is bound by residues Gly215 and 236 to 237 (GS).

It belongs to the PdxS/SNZ family. In terms of assembly, in the presence of PdxT, forms a dodecamer of heterodimers.

It carries out the reaction aldehydo-D-ribose 5-phosphate + D-glyceraldehyde 3-phosphate + L-glutamine = pyridoxal 5'-phosphate + L-glutamate + phosphate + 3 H2O + H(+). The protein operates within cofactor biosynthesis; pyridoxal 5'-phosphate biosynthesis. In terms of biological role, catalyzes the formation of pyridoxal 5'-phosphate from ribose 5-phosphate (RBP), glyceraldehyde 3-phosphate (G3P) and ammonia. The ammonia is provided by the PdxT subunit. Can also use ribulose 5-phosphate and dihydroxyacetone phosphate as substrates, resulting from enzyme-catalyzed isomerization of RBP and G3P, respectively. In Listeria monocytogenes serotype 4b (strain CLIP80459), this protein is Pyridoxal 5'-phosphate synthase subunit PdxS.